The following is a 331-amino-acid chain: Ketol-acid reductoisomerase (NADP(+)) (331 aa).

The KARI N-terminal Rossmann domain occupies 2–182 (ARMYYDQDAN…GGTRAGILET (181 aa)). NADP(+)-binding positions include 25 to 28 (YGSQ), Ser51, Ser53, and 83 to 86 (DEVQ). Residue His108 is part of the active site. Gly134 contacts NADP(+). In terms of domain architecture, KARI C-terminal knotted spans 183–328 (TFREETETDL…KDLRAMFSWL (146 aa)). The Mg(2+) site is built by Asp191, Glu195, Glu227, and Glu231. Ser252 provides a ligand contact to substrate.

Belongs to the ketol-acid reductoisomerase family. As to quaternary structure, homooctamer. Mg(2+) is required as a cofactor.

It catalyses the reaction (2R)-2,3-dihydroxy-3-methylbutanoate + NADP(+) = (2S)-2-acetolactate + NADPH + H(+). The catalysed reaction is (2R,3R)-2,3-dihydroxy-3-methylpentanoate + NADP(+) = (S)-2-ethyl-2-hydroxy-3-oxobutanoate + NADPH + H(+). It participates in amino-acid biosynthesis; L-isoleucine biosynthesis; L-isoleucine from 2-oxobutanoate: step 2/4. The protein operates within amino-acid biosynthesis; L-valine biosynthesis; L-valine from pyruvate: step 2/4. In terms of biological role, involved in the biosynthesis of branched-chain amino acids (BCAA). Catalyzes an alkyl-migration followed by a ketol-acid reduction of (S)-2-acetolactate (S2AL) to yield (R)-2,3-dihydroxy-isovalerate. In the isomerase reaction, S2AL is rearranged via a Mg-dependent methyl migration to produce 3-hydroxy-3-methyl-2-ketobutyrate (HMKB). In the reductase reaction, this 2-ketoacid undergoes a metal-dependent reduction by NADPH to yield (R)-2,3-dihydroxy-isovalerate. The protein is Ketol-acid reductoisomerase (NADP(+)) of Synechocystis sp. (strain ATCC 27184 / PCC 6803 / Kazusa).